Reading from the N-terminus, the 78-residue chain is UPF0401 protein YubL (78 aa).

This sequence belongs to the UPF0401 family.

This Salmonella typhi protein is UPF0401 protein YubL (yubL).